An 861-amino-acid polypeptide reads, in one-letter code: MKQNYCPKTIEPYVQSIWKKKNTFKVTENSNKEKFYCLAMIPYPSGKLHMGHVRNYTISDVIARYQRMLGKNVLHPMGWDAFGLPAENAAIKNNTHPAQWTYENIKYMKQQLISLGLSYDWDREITTCKPEYYQWEQWFFIELYKKNLVYKKKSWVNWCEYDKTVLANEQVINELCWRCNNKVIKKKIFQWFIKITKYAEELLNDLDNLPEWPEKVKTMQHNWIGRNHGIKIKLKLANQHTILNDVFISKPSTLMGATFITLSPSHELSFKIARKKHKIQEFIENCSSNTNTYNDINNTNIGINTNEFALHPITKKKLPIWITNYVLSDYDTNSILCVPAHNQHDLNFAIKYNLKIKAVILNLDGTEPKIKNTAMTSMGKLFNSNQYNNLNYQEGSYRIIQDLENNHIGKKITYYRLRDWSISRQRYWGAPIPMAVLENKKNVPIPKQYLPIILPETIPFKNIKPLSNNILLKKIYIDEKIAICESDTFDTFLESSWYYARFTCNNFHKGMISQKLANYWLPVDQYIGGIEHAVMHLIYFRFVHKLLRDLGLVYSNEPVKKLLCQGMVLSDAFYYFDHNKQKQWISAKSITIKYDSNHKIQSHFYSNNKKIFHAGMIKMSKSKFNGIEPEDIIKKYGTDTIRLFIMFAAPVESALEWKESGVKGIHKFLKKLWVLSYNHIKLYNHKIKLRINLFTEQQQHIYSELHKTIKIVSQYITDTQSFNVAISKIMKFSNTLMSISLKNEQNQALMQESLLAVIQMLYPFIPHFSFAIWEFLSPKKENIDFISWPKYNFKAILSKLKYTIIIQINGKKRHKILALKNSSQEKILEIILNENKIKKYLNNKPIQKIIYIPNKILNLVI.

The 'HIGH' region motif lies at 42–52; it reads PYPSGKLHMGH. Residues 618–622 carry the 'KMSKS' region motif; sequence KMSKS. Position 621 (Lys621) interacts with ATP.

Belongs to the class-I aminoacyl-tRNA synthetase family.

The protein localises to the cytoplasm. It catalyses the reaction tRNA(Leu) + L-leucine + ATP = L-leucyl-tRNA(Leu) + AMP + diphosphate. The chain is Leucine--tRNA ligase from Buchnera aphidicola subsp. Baizongia pistaciae (strain Bp).